The sequence spans 66 residues: Neurotoxin BmK AGP-SYPU1 (66 aa).

Residues 2–64 (RDAYIAQNYN…KPIRIPGKCH (63 aa)) form the LCN-type CS-alpha/beta domain. Disulfide bonds link Cys-12–Cys-63, Cys-16–Cys-36, Cys-22–Cys-46, and Cys-26–Cys-48. The propeptide at 65–66 (RR) is removed by a carboxypeptidase.

In terms of tissue distribution, expressed by the venom gland.

It localises to the secreted. Functionally, alpha toxins bind voltage-independently at site-3 of sodium channels (Nav) and inhibit the inactivation of the activated channels, thereby blocking neuronal transmission. This toxin has a strong analgesic effect when administered to mice by intraperitoneal injection. The sequence is that of Neurotoxin BmK AGP-SYPU1 from Olivierus martensii (Manchurian scorpion).